The chain runs to 585 residues: Proline--tRNA ligase (585 aa).

This sequence belongs to the class-II aminoacyl-tRNA synthetase family. ProS type 1 subfamily. Homodimer.

The protein localises to the cytoplasm. It carries out the reaction tRNA(Pro) + L-proline + ATP = L-prolyl-tRNA(Pro) + AMP + diphosphate. Its function is as follows. Catalyzes the attachment of proline to tRNA(Pro) in a two-step reaction: proline is first activated by ATP to form Pro-AMP and then transferred to the acceptor end of tRNA(Pro). As ProRS can inadvertently accommodate and process non-cognate amino acids such as alanine and cysteine, to avoid such errors it has two additional distinct editing activities against alanine. One activity is designated as 'pretransfer' editing and involves the tRNA(Pro)-independent hydrolysis of activated Ala-AMP. The other activity is designated 'posttransfer' editing and involves deacylation of mischarged Ala-tRNA(Pro). The misacylated Cys-tRNA(Pro) is not edited by ProRS. This Nocardia farcinica (strain IFM 10152) protein is Proline--tRNA ligase.